Here is a 175-residue protein sequence, read N- to C-terminus: uncharacterized protein (175 aa).

The segment at 71 to 166 (QPKPTYNVSF…KPPQFKIRPA (96 aa)) adopts a DNL-type zinc-finger fold. Positions 82, 85, 107, and 110 each coordinate Zn(2+).

This is an uncharacterized protein from Schizosaccharomyces pombe (strain 972 / ATCC 24843) (Fission yeast).